A 125-amino-acid polypeptide reads, in one-letter code: Neuraminyllactose-binding hemagglutinin (125 aa).

An N-acetyl-neuraminyl-alpha(2,3)-lactose binding motif region spans residues 92 to 97 (KRTIQK).

The protein localises to the cell outer membrane. The protein is Neuraminyllactose-binding hemagglutinin (hpaA) of Helicobacter pylori (Campylobacter pylori).